Reading from the N-terminus, the 195-residue chain is MVIGLLKYLTPAVKVQMAARALGLSPAEVAAIDGTLGRVSAMPAVAVVLGGKPLSLATIASVVSDANPSATVGALMPAVQGMVSSDEGASALAKTVVGFMESDPNSDVLVQLLHKVSNLPIVGFGDTQYADPADFLAKGVFPLIRKPEVEVQAAPFTCRQCDHVDHITDVPQTSTFVHKCTSCGFVQMVHRKDVP.

Its function is as follows. Assembly factor active in membrane morphogenesis. This chain is Morphogenetic protein (P12), found in Pseudomonas phage phi6 (Bacteriophage phi-6).